A 1102-amino-acid polypeptide reads, in one-letter code: Trafficking protein particle complex II-specific subunit 130 (1102 aa).

It belongs to the TMEM1 family. In terms of assembly, part of the multisubunit TRAPP (transport protein particle) II complex composed of BET3, BET5, TRS20, TRS23, TRS31, TRS33, TRS65, TRS120 and TRS130. Interacts with YPT31 and YPT32.

It localises to the golgi apparatus. Its function is as follows. Specific subunit of the TRAPP II complex, a highly conserved vesicle tethering complex that functions in the late Golgi as a guanine nucleotide exchange factor (GEF) for the Golgi YPT1 GTPase. TRS130 plays a role in the YPT GEF activity of TRAPP II in concert with the two other TRAPP II-specific subunits TRS65 and TRS120. Required for both the cytoplasm-to-vacuole targeting (Cvt) pathway and starvation-induced autophagy through its role in ATG8 and ATG9 trafficking. The sequence is that of Trafficking protein particle complex II-specific subunit 130 (TRS130) from Saccharomyces cerevisiae (strain ATCC 204508 / S288c) (Baker's yeast).